The sequence spans 46 residues: Protein PsbN (46 aa).

Residues 7–27 (ALSVALGVMAVVLGLTGFGVY) form a helical membrane-spanning segment.

This sequence belongs to the PsbN family.

It localises to the cellular thylakoid membrane. Functionally, may play a role in photosystem I and II biogenesis. This chain is Protein PsbN, found in Synechococcus sp. (strain CC9902).